A 357-amino-acid chain; its full sequence is GPI mannosyltransferase 2 (357 aa).

A run of 8 helical transmembrane segments spans residues 6–26, 86–106, 128–148, 167–187, 201–221, 257–277, 286–306, and 334–354; these read TLIV…LVVP, AIAY…ALML, ILSP…FALL, VLGA…PFLF, GVSV…TQYL, YWTA…YLMY, LVPF…MWHV, and YVVR…GAYL.

The protein belongs to the PIGV family.

The protein localises to the endoplasmic reticulum membrane. It participates in glycolipid biosynthesis; glycosylphosphatidylinositol-anchor biosynthesis. Its function is as follows. Mannosyltransferase involved in glycosylphosphatidylinositol-anchor biosynthesis. Transfers the second mannose to the glycosylphosphatidylinositol during GPI precursor assembly. This Yarrowia lipolytica (strain CLIB 122 / E 150) (Yeast) protein is GPI mannosyltransferase 2 (GPI18).